Consider the following 130-residue polypeptide: Small ribosomal subunit protein uS9 (130 aa).

Belongs to the universal ribosomal protein uS9 family.

The sequence is that of Small ribosomal subunit protein uS9 from Cupriavidus pinatubonensis (strain JMP 134 / LMG 1197) (Cupriavidus necator (strain JMP 134)).